A 73-amino-acid chain; its full sequence is Translation initiation factor IF-1 (73 aa).

The S1-like domain maps to 1–73 (MAKKDGVIEI…TRGRIVYRYK (73 aa)).

The protein belongs to the IF-1 family. In terms of assembly, component of the 30S ribosomal translation pre-initiation complex which assembles on the 30S ribosome in the order IF-2 and IF-3, IF-1 and N-formylmethionyl-tRNA(fMet); mRNA recruitment can occur at any time during PIC assembly.

It is found in the cytoplasm. Its function is as follows. One of the essential components for the initiation of protein synthesis. Stabilizes the binding of IF-2 and IF-3 on the 30S subunit to which N-formylmethionyl-tRNA(fMet) subsequently binds. Helps modulate mRNA selection, yielding the 30S pre-initiation complex (PIC). Upon addition of the 50S ribosomal subunit IF-1, IF-2 and IF-3 are released leaving the mature 70S translation initiation complex. This chain is Translation initiation factor IF-1, found in Clavibacter michiganensis subsp. michiganensis (strain NCPPB 382).